Here is a 130-residue protein sequence, read N- to C-terminus: UPF0102 protein RPA0323 (130 aa).

It belongs to the UPF0102 family.

This chain is UPF0102 protein RPA0323, found in Rhodopseudomonas palustris (strain ATCC BAA-98 / CGA009).